A 1030-amino-acid chain; its full sequence is Probable serine/threonine-protein kinase SIS8 (1030 aa).

Polar residues-rich tracts occupy residues 44 to 58 and 399 to 419; these read PNQS…STTK and YSAS…NGIE. Disordered stretches follow at residues 44 to 84, 399 to 474, 555 to 625, and 689 to 736; these read PNQS…PEIK, YSAS…KAPF, TVES…ASST, and LGSN…SDCD. Composition is skewed to basic and acidic residues over residues 426 to 435, 458 to 471, and 560 to 580; these read TEFRTGEHRS, ISRE…KVEK, and NSTE…EGRH. Residues 613-625 show a composition bias toward low complexity; it reads SQSDSSHSEASST. The 256-residue stretch at 748–1003 folds into the Protein kinase domain; that stretch reads ITVGERIGLG…AEIMASLKRL (256 aa). ATP-binding positions include 754-762 and Lys-775; that span reads IGLGSYGEV. Asp-871 serves as the catalytic Proton acceptor. Positions 1007 to 1023 are enriched in polar residues; that stretch reads VTGSNIPRPVPSSSSLP. A disordered region spans residues 1007–1030; that stretch reads VTGSNIPRPVPSSSSLPTEHEQKD.

The protein belongs to the protein kinase superfamily. Ser/Thr protein kinase family. Interacts with UGT72E1. As to expression, expressed roots, rosette and cauline leaves, and at lower levels in flowers and siliques.

It localises to the nucleus. It catalyses the reaction L-seryl-[protein] + ATP = O-phospho-L-seryl-[protein] + ADP + H(+). The enzyme catalyses L-threonyl-[protein] + ATP = O-phospho-L-threonyl-[protein] + ADP + H(+). In terms of biological role, acts as a negative regulator of salt tolerance. Mediates sugar response during early seedling development. The sequence is that of Probable serine/threonine-protein kinase SIS8 from Arabidopsis thaliana (Mouse-ear cress).